The sequence spans 149 residues: MSGTSARDATLLAFDYGEKRIGVAIGNALTRSARALVVIPNLNREHRFKAVGELLAEWRPDALVVGLPMHPDGTPHDMTQQAKRFGNQLNGRFGLPVTWVDERYSSVEAEAGMRERNVRGRARTDMLDAEAARVILQQYLDQLSDHEPH.

Belongs to the YqgF nuclease family.

The protein localises to the cytoplasm. Functionally, could be a nuclease involved in processing of the 5'-end of pre-16S rRNA. This Burkholderia multivorans (strain ATCC 17616 / 249) protein is Putative pre-16S rRNA nuclease.